The following is a 255-amino-acid chain: Imidazole glycerol phosphate synthase subunit HisF (255 aa).

Residues Asp13 and Asp132 contribute to the active site.

Belongs to the HisA/HisF family. In terms of assembly, heterodimer of HisH and HisF.

The protein localises to the cytoplasm. The enzyme catalyses 5-[(5-phospho-1-deoxy-D-ribulos-1-ylimino)methylamino]-1-(5-phospho-beta-D-ribosyl)imidazole-4-carboxamide + L-glutamine = D-erythro-1-(imidazol-4-yl)glycerol 3-phosphate + 5-amino-1-(5-phospho-beta-D-ribosyl)imidazole-4-carboxamide + L-glutamate + H(+). It functions in the pathway amino-acid biosynthesis; L-histidine biosynthesis; L-histidine from 5-phospho-alpha-D-ribose 1-diphosphate: step 5/9. Functionally, IGPS catalyzes the conversion of PRFAR and glutamine to IGP, AICAR and glutamate. The HisF subunit catalyzes the cyclization activity that produces IGP and AICAR from PRFAR using the ammonia provided by the HisH subunit. The protein is Imidazole glycerol phosphate synthase subunit HisF of Leptospira biflexa serovar Patoc (strain Patoc 1 / ATCC 23582 / Paris).